A 75-amino-acid chain; its full sequence is DNA-directed RNA polymerase subunit Rpo5 (75 aa).

This sequence belongs to the archaeal Rpo5/eukaryotic RPB5 RNA polymerase subunit family. In terms of assembly, part of the RNA polymerase complex.

Its subcellular location is the cytoplasm. The catalysed reaction is RNA(n) + a ribonucleoside 5'-triphosphate = RNA(n+1) + diphosphate. DNA-dependent RNA polymerase (RNAP) catalyzes the transcription of DNA into RNA using the four ribonucleoside triphosphates as substrates. In Pyrobaculum aerophilum (strain ATCC 51768 / DSM 7523 / JCM 9630 / CIP 104966 / NBRC 100827 / IM2), this protein is DNA-directed RNA polymerase subunit Rpo5.